The sequence spans 313 residues: Aspartate carbamoyltransferase catalytic subunit (313 aa).

Carbamoyl phosphate contacts are provided by R58 and T59. Residue K86 coordinates L-aspartate. R108, H136, and Q139 together coordinate carbamoyl phosphate. Residues R169 and R223 each coordinate L-aspartate. Residues G264 and P265 each coordinate carbamoyl phosphate.

The protein belongs to the aspartate/ornithine carbamoyltransferase superfamily. ATCase family. In terms of assembly, heterododecamer (2C3:3R2) of six catalytic PyrB chains organized as two trimers (C3), and six regulatory PyrI chains organized as three dimers (R2).

The catalysed reaction is carbamoyl phosphate + L-aspartate = N-carbamoyl-L-aspartate + phosphate + H(+). The protein operates within pyrimidine metabolism; UMP biosynthesis via de novo pathway; (S)-dihydroorotate from bicarbonate: step 2/3. Functionally, catalyzes the condensation of carbamoyl phosphate and aspartate to form carbamoyl aspartate and inorganic phosphate, the committed step in the de novo pyrimidine nucleotide biosynthesis pathway. The chain is Aspartate carbamoyltransferase catalytic subunit from Halothermothrix orenii (strain H 168 / OCM 544 / DSM 9562).